Here is a 321-residue protein sequence, read N- to C-terminus: Cytochrome c biogenesis protein CcsA (321 aa).

The next 7 helical transmembrane spans lie at 9–29, 44–64, 68–88, 143–163, 226–246, 260–274, and 289–309; these read ILTH…LITL, GMIA…ASSG, LSNL…LHMI, MLLS…LLMI, VISL…VWAN, TWAF…IYLH, and VASI…LLGI.

It belongs to the CcmF/CycK/Ccl1/NrfE/CcsA family. As to quaternary structure, may interact with Ccs1.

Its subcellular location is the plastid. The protein localises to the chloroplast thylakoid membrane. In terms of biological role, required during biogenesis of c-type cytochromes (cytochrome c6 and cytochrome f) at the step of heme attachment. The sequence is that of Cytochrome c biogenesis protein CcsA from Oryza sativa subsp. indica (Rice).